We begin with the raw amino-acid sequence, 170 residues long: Lipocalin Cav p 2.0101 (170 aa).

The first 16 residues, 1–16 (MMQILLLALAVSLACA), serve as a signal peptide directing secretion. Disulfide bonds link cysteine 56/cysteine 60 and cysteine 75/cysteine 168.

Belongs to the calycin superfamily. Lipocalin family. Post-translationally, not N-linked glycosylated. As to expression, expressed in harderian gland (at protein level). Expressed in hair (at protein level). Expressed in submaxillary gland and harderian gland.

The protein resides in the secreted. In Cavia porcellus (Guinea pig), this protein is Lipocalin Cav p 2.0101 (Lcncavp2).